A 92-amino-acid chain; its full sequence is Small ribosomal subunit protein uS19 (92 aa).

The protein belongs to the universal ribosomal protein uS19 family.

In terms of biological role, protein S19 forms a complex with S13 that binds strongly to the 16S ribosomal RNA. In Agrobacterium fabrum (strain C58 / ATCC 33970) (Agrobacterium tumefaciens (strain C58)), this protein is Small ribosomal subunit protein uS19.